A 434-amino-acid polypeptide reads, in one-letter code: Potassium/proton antiporter CemA (434 aa).

Transmembrane regions (helical) follow at residues 75 to 95 (LLEYKLSLWLIQLFLIFSLFF), 210 to 230 (LASLQYIGCLFFIPLGVSFFF), 311 to 331 (IVLHLLTDLIWFITLSCLFIL), 359 to 379 (ILLLTDLCIGFHSPHGWEIVI), and 395 to 415 (ISCFVSTFPVILDTVFKYLIF).

It belongs to the CemA family.

The protein resides in the plastid. It is found in the chloroplast inner membrane. It catalyses the reaction K(+)(in) + H(+)(out) = K(+)(out) + H(+)(in). Functionally, contributes to K(+)/H(+) antiport activity by supporting proton efflux to control proton extrusion and homeostasis in chloroplasts in a light-dependent manner to modulate photosynthesis. Prevents excessive induction of non-photochemical quenching (NPQ) under continuous-light conditions. Indirectly promotes efficient inorganic carbon uptake into chloroplasts. The protein is Potassium/proton antiporter CemA of Marchantia polymorpha (Common liverwort).